Consider the following 427-residue polypeptide: Acyl-lipid 8-desaturase (427 aa).

The disordered stretch occupies residues M1–A24. The 49-residue stretch at I36–E84 folds into the Cytochrome b5 heme-binding domain. The heme site is built by H52 and H75. Positions H178–K182 match the Histidine box-1 motif. Residues V189–W209 form a helical membrane-spanning segment. Residues R213–H218 carry the Histidine box-2 motif. The next 2 membrane-spanning stretches (helical) occupy residues V261–M281 and M286–G306. Positions Q373 to H377 match the Histidine box-3 motif.

It belongs to the fatty acid desaturase type 1 family. Requires Fe(2+) as cofactor.

It is found in the membrane. Functionally, fatty acid desaturase that introduces a cis double bond at the 8-position in 20-carbon polyunsaturated fatty acids incorporated in a glycerolipid that contain a Delta(8) double bond to yield (20:4(8,11,14,17)). This is Acyl-lipid 8-desaturase from Rebecca salina (Marine microalga).